A 295-amino-acid polypeptide reads, in one-letter code: Mycothiol acetyltransferase (295 aa).

N-acetyltransferase domains are found at residues 5-141 (VEIR…TPLP) and 149-295 (VRLR…MYRR). A 1D-myo-inositol 2-(L-cysteinylamino)-2-deoxy-alpha-D-glucopyranoside-binding site is contributed by E35. 76–78 (LVV) contacts acetyl-CoA. The 1D-myo-inositol 2-(L-cysteinylamino)-2-deoxy-alpha-D-glucopyranoside site is built by E176, K215, and E229. Acetyl-CoA contacts are provided by residues 233–235 (VGV) and 240–246 (RGTGLGR). Y267 lines the 1D-myo-inositol 2-(L-cysteinylamino)-2-deoxy-alpha-D-glucopyranoside pocket. 272–277 (NTAAVR) contacts acetyl-CoA.

This sequence belongs to the acetyltransferase family. MshD subfamily. As to quaternary structure, monomer.

The enzyme catalyses 1D-myo-inositol 2-(L-cysteinylamino)-2-deoxy-alpha-D-glucopyranoside + acetyl-CoA = mycothiol + CoA + H(+). Functionally, catalyzes the transfer of acetyl from acetyl-CoA to desacetylmycothiol (Cys-GlcN-Ins) to form mycothiol. This chain is Mycothiol acetyltransferase, found in Thermobispora bispora (strain ATCC 19993 / DSM 43833 / CBS 139.67 / JCM 10125 / KCTC 9307 / NBRC 14880 / R51).